A 144-amino-acid chain; its full sequence is Complexin-1 (144 aa).

The span at 1-10 (MVSFLGGGLL) shows a compositional bias: gly residues. The interval 1–119 (MVSFLGGGLL…SGFPKNLDDL (119 aa)) is disordered. Composition is skewed to basic and acidic residues over residues 18 to 27 (LEEKEDKKEG) and 36 to 86 (AEAK…EGRL). Residues 29–67 (EEEDPEIAEAKREAEEKRNEKYRKMEEEREVMRQGIRDK) are a coiled coil. Over residues 103 to 112 (LQSSAQSSGF) the composition is skewed to polar residues. Cysteine 141 is subject to Cysteine methyl ester. Cysteine 141 is lipidated: S-farnesyl cysteine. Positions 142 to 144 (NLQ) are cleaved as a propeptide — removed in mature form.

Belongs to the complexin/synaphin family. In terms of assembly, binds to the SNARE core complex containing SNAP25, synaptobrevin and syntaxin-1. In terms of tissue distribution, expressed in a subset of neurons in the central nervous system, including large serotoninergic Retzius neurons and pressure-sensitive P cells.

The protein resides in the membrane. In terms of biological role, positively regulates a late step in synaptic vesicle exocytosis. The chain is Complexin-1 (cpx1) from Hirudo medicinalis (Medicinal leech).